Here is a 1017-residue protein sequence, read N- to C-terminus: Semaphorin-6D (1017 aa).

The first 20 residues, Met1–Ala20, serve as a signal peptide directing secretion. At Val21–Asn606 the chain is on the extracellular side. Positions Asp27–Leu512 constitute a Sema domain. N-linked (GlcNAc...) asparagine glycosylation occurs at Asn51. Disulfide bonds link Cys108–Cys118, Cys136–Cys145, Cys259–Cys370, and Cys284–Cys329. A glycan (N-linked (GlcNAc...) asparagine) is linked at Asn283. N-linked (GlcNAc...) asparagine glycosylation is found at Asn435 and Asn461. Intrachain disulfides connect Cys477–Cys506, Cys515–Cys533, Cys521–Cys568, and Cys525–Cys541. The region spanning Arg514–His569 is the PSI domain. A helical membrane pass occupies residues Val607–Val627. Residues Tyr628 to Tyr1017 are Cytoplasmic-facing. Phosphoserine occurs at positions 667, 678, and 688. 4 disordered regions span residues Ser688 to Glu719, Ala731 to Pro769, Thr783 to Asp818, and Leu873 to Ser912. Thr717 carries the phosphothreonine modification. Residues Ser734–Thr749 are compositionally biased toward basic and acidic residues. Ser875, Ser901, and Ser927 each carry phosphoserine. Residues Ser875 to Thr886 are compositionally biased toward polar residues. Residues Leu965–Leu981 are compositionally biased toward polar residues. The tract at residues Leu965–Tyr1017 is disordered.

This sequence belongs to the semaphorin family.

Its subcellular location is the cell membrane. Shows growth cone collapsing activity on dorsal root ganglion (DRG) neurons in vitro. May be a stop signal for the DRG neurons in their target areas, and possibly also for other neurons. May also be involved in the maintenance and remodeling of neuronal connections. Ligand of TREM2 with PLXNA1 as coreceptor in dendritic cells, plays a role in the generation of immune responses and skeletal homeostasis. This Pongo abelii (Sumatran orangutan) protein is Semaphorin-6D (SEMA6D).